The primary structure comprises 443 residues: Serine/threonine-protein phosphatase 2A 55 kDa regulatory subunit B beta isoform (443 aa).

WD repeat units lie at residues 22-61 (TEADIISTVEFNHTGELLATGDKGGRVVIFQREQESKNQV), 87-128 (EIEE…KRPE), 171-209 (AHTYHINSISVNSDYETYMSADDLRINLWNFEITNQSFN), and 220-260 (ELTE…LCDR). Ser-275 carries the post-translational modification Phosphoserine. WD repeat units follow at residues 279–317 (EIISSISDVKFSHSGRYIMTRDYLTAKVWDLNMENRPVE), 334–375 (ENDC…DVTL), and 410–442 (DFSKKILHTAWHPSENIIAVAATNNLYIFQDKV). Tyr-295 is modified (phosphotyrosine). Thr-298 is modified (phosphothreonine).

The protein belongs to the phosphatase 2A regulatory subunit B family. In terms of assembly, PP2A consists of a common heterodimeric core enzyme, composed of a 36 kDa catalytic subunit (subunit C) and a 65 kDa constant regulatory subunit (PR65 or subunit A), that associates with a variety of regulatory subunits. Proteins that associate with the core dimer include three families of regulatory subunits B (the R2/B/PR55/B55, R3/B''/PR72/PR130/PR59 and R5/B'/B56 families), the 48 kDa variable regulatory subunit, viral proteins, and cell signaling molecules. Interacts with IER5 (via N- and C-terminal regions). Interacts with TOMM22. As to expression, expressed in the brain. Isoform 1 and isoform 2 are expressed in the forbrain. Isoform 1 is more strongly expressed than isoform 2 in the olfactory bulb. Isoform 1 and isoform 2 are weakly expressed in the cerebellum. Isoform 1 is expressed in the testis. Isoform 2 expression is undetectable at birth rising to adult level at day 14.

Its subcellular location is the cytoplasm. The protein resides in the cytoskeleton. It is found in the membrane. The protein localises to the mitochondrion. It localises to the mitochondrion outer membrane. Its function is as follows. The B regulatory subunit might modulate substrate selectivity and catalytic activity, and might also direct the localization of the catalytic enzyme to a particular subcellular compartment. Within the PP2A holoenzyme complex, isoform 2 is required to promote proapoptotic activity. Isoform 2 regulates neuronal survival through the mitochondrial fission and fusion balance. In Rattus norvegicus (Rat), this protein is Serine/threonine-protein phosphatase 2A 55 kDa regulatory subunit B beta isoform (Ppp2r2b).